The primary structure comprises 114 residues: T cell receptor alpha variable 10 (114 aa).

A signal peptide spans 1–21; it reads MKKHLTTFLVILWLYFYRGNG. An Ig-like domain is found at 23–114; that stretch reads NQVEQSPQSL…DSASYICVVS (92 aa). Residues asparagine 39 and asparagine 45 are each glycosylated (N-linked (GlcNAc...) asparagine). Residues cysteine 44 and cysteine 111 are joined by a disulfide bond.

In terms of assembly, alpha-beta TR is a heterodimer composed of an alpha and beta chain; disulfide-linked. The alpha-beta TR is associated with the transmembrane signaling CD3 coreceptor proteins to form the TR-CD3 (TcR or TCR). The assembly of alpha-beta TR heterodimers with CD3 occurs in the endoplasmic reticulum where a single alpha-beta TR heterodimer associates with one CD3D-CD3E heterodimer, one CD3G-CD3E heterodimer and one CD247 homodimer forming a stable octameric structure. CD3D-CD3E and CD3G-CD3E heterodimers preferentially associate with TR alpha and TR beta chains, respectively. The association of the CD247 homodimer is the last step of TcR assembly in the endoplasmic reticulum and is required for transport to the cell surface.

It localises to the cell membrane. In terms of biological role, v region of the variable domain of T cell receptor (TR) alpha chain that participates in the antigen recognition. Alpha-beta T cell receptors are antigen specific receptors which are essential to the immune response and are present on the cell surface of T lymphocytes. Recognize peptide-major histocompatibility (MH) (pMH) complexes that are displayed by antigen presenting cells (APC), a prerequisite for efficient T cell adaptive immunity against pathogens. Binding of alpha-beta TR to pMH complex initiates TR-CD3 clustering on the cell surface and intracellular activation of LCK that phosphorylates the ITAM motifs of CD3G, CD3D, CD3E and CD247 enabling the recruitment of ZAP70. In turn ZAP70 phosphorylates LAT, which recruits numerous signaling molecules to form the LAT signalosome. The LAT signalosome propagates signal branching to three major signaling pathways, the calcium, the mitogen-activated protein kinase (MAPK) kinase and the nuclear factor NF-kappa-B (NF-kB) pathways, leading to the mobilization of transcription factors that are critical for gene expression and essential for T cell growth and differentiation. The T cell repertoire is generated in the thymus, by V-(D)-J rearrangement. This repertoire is then shaped by intrathymic selection events to generate a peripheral T cell pool of self-MH restricted, non-autoaggressive T cells. Post-thymic interaction of alpha-beta TR with the pMH complexes shapes TR structural and functional avidity. The polypeptide is T cell receptor alpha variable 10 (Homo sapiens (Human)).